A 274-amino-acid chain; its full sequence is 5'-nucleotidase SurE (274 aa).

A divalent metal cation is bound by residues aspartate 12, aspartate 13, serine 45, and asparagine 103.

This sequence belongs to the SurE nucleotidase family. It depends on a divalent metal cation as a cofactor.

It localises to the cytoplasm. The enzyme catalyses a ribonucleoside 5'-phosphate + H2O = a ribonucleoside + phosphate. Nucleotidase that shows phosphatase activity on nucleoside 5'-monophosphates. This chain is 5'-nucleotidase SurE, found in Chlamydia felis (strain Fe/C-56) (Chlamydophila felis).